We begin with the raw amino-acid sequence, 163 residues long: Nucleotide-binding protein PC1_1036 (163 aa).

It belongs to the YajQ family.

Nucleotide-binding protein. This is Nucleotide-binding protein PC1_1036 from Pectobacterium carotovorum subsp. carotovorum (strain PC1).